A 134-amino-acid polypeptide reads, in one-letter code: uncharacterized protein (134 aa).

The chain crosses the membrane as a helical span at residues serine 110–serine 130.

It is found in the membrane. This is an uncharacterized protein from Saccharomyces cerevisiae (strain ATCC 204508 / S288c) (Baker's yeast).